The following is a 126-amino-acid chain: Phosphoribosyl-AMP cyclohydrolase (126 aa).

Aspartate 82 serves as a coordination point for Mg(2+). Cysteine 83 lines the Zn(2+) pocket. 2 residues coordinate Mg(2+): aspartate 84 and aspartate 86. Zn(2+) is bound by residues cysteine 99 and cysteine 106.

The protein belongs to the PRA-CH family. In terms of assembly, homodimer. It depends on Mg(2+) as a cofactor. Zn(2+) is required as a cofactor.

Its subcellular location is the cytoplasm. It catalyses the reaction 1-(5-phospho-beta-D-ribosyl)-5'-AMP + H2O = 1-(5-phospho-beta-D-ribosyl)-5-[(5-phospho-beta-D-ribosylamino)methylideneamino]imidazole-4-carboxamide. The protein operates within amino-acid biosynthesis; L-histidine biosynthesis; L-histidine from 5-phospho-alpha-D-ribose 1-diphosphate: step 3/9. Catalyzes the hydrolysis of the adenine ring of phosphoribosyl-AMP. This Micrococcus luteus (strain ATCC 4698 / DSM 20030 / JCM 1464 / CCM 169 / CCUG 5858 / IAM 1056 / NBRC 3333 / NCIMB 9278 / NCTC 2665 / VKM Ac-2230) (Micrococcus lysodeikticus) protein is Phosphoribosyl-AMP cyclohydrolase.